A 328-amino-acid chain; its full sequence is Arabinose 5-phosphate isomerase KdsD (328 aa).

Residues Ala41–Phe184 enclose the SIS domain. Residues Gly75–Thr76, His82, His88, Ala114–His123, and Lys148–Pro150 contribute to the substrate site. Residue His82 participates in Zn(2+) binding. One can recognise a CBS 1 domain in the interval Met210 to Met268. A substrate-binding site is contributed by Glu275. The CBS 2 domain maps to Met277 to Val328.

The protein belongs to the SIS family. GutQ/KpsF subfamily. In terms of assembly, homotetramer.

The enzyme catalyses D-arabinose 5-phosphate = D-ribulose 5-phosphate. It participates in carbohydrate biosynthesis; 3-deoxy-D-manno-octulosonate biosynthesis; 3-deoxy-D-manno-octulosonate from D-ribulose 5-phosphate: step 1/3. It functions in the pathway bacterial outer membrane biogenesis; lipopolysaccharide biosynthesis. Involved in the biosynthesis of 3-deoxy-D-manno-octulosonate (KDO), a unique 8-carbon sugar component of lipopolysaccharides (LPSs). Catalyzes the reversible aldol-ketol isomerization between D-ribulose 5-phosphate (Ru5P) and D-arabinose 5-phosphate (A5P). The protein is Arabinose 5-phosphate isomerase KdsD (kdsD) of Salmonella typhimurium (strain LT2 / SGSC1412 / ATCC 700720).